The sequence spans 476 residues: Aspartyl/glutamyl-tRNA(Asn/Gln) amidotransferase subunit B (476 aa).

It belongs to the GatB/GatE family. GatB subfamily. As to quaternary structure, heterotrimer of A, B and C subunits.

It carries out the reaction L-glutamyl-tRNA(Gln) + L-glutamine + ATP + H2O = L-glutaminyl-tRNA(Gln) + L-glutamate + ADP + phosphate + H(+). The enzyme catalyses L-aspartyl-tRNA(Asn) + L-glutamine + ATP + H2O = L-asparaginyl-tRNA(Asn) + L-glutamate + ADP + phosphate + 2 H(+). Allows the formation of correctly charged Asn-tRNA(Asn) or Gln-tRNA(Gln) through the transamidation of misacylated Asp-tRNA(Asn) or Glu-tRNA(Gln) in organisms which lack either or both of asparaginyl-tRNA or glutaminyl-tRNA synthetases. The reaction takes place in the presence of glutamine and ATP through an activated phospho-Asp-tRNA(Asn) or phospho-Glu-tRNA(Gln). In Lactobacillus gasseri (strain ATCC 33323 / DSM 20243 / BCRC 14619 / CIP 102991 / JCM 1131 / KCTC 3163 / NCIMB 11718 / NCTC 13722 / AM63), this protein is Aspartyl/glutamyl-tRNA(Asn/Gln) amidotransferase subunit B.